The sequence spans 190 residues: Protein LZIC (190 aa).

Positions 2–63 form a coiled coil; sequence ASRGKTETSK…SEFNDSLKKI (62 aa).

It belongs to the CTNNBIP1 family. In terms of assembly, does not interact with CTNNB1. In terms of tissue distribution, ubiquitously expressed, with highest levels in kidney. Up-regulated in several cases of gastric cancers.

The protein is Protein LZIC (LZIC) of Homo sapiens (Human).